The chain runs to 682 residues: Potassium-transporting ATPase ATP-binding subunit (682 aa).

4 consecutive transmembrane segments (helical) span residues 34 to 54 (PVMF…IAMA), 62 to 82 (ALFS…ANFA), 219 to 239 (IALT…TATL), and 254 to 274 (VLVA…LSAI). Residue aspartate 307 is the 4-aspartylphosphate intermediate of the active site. ATP is bound by residues aspartate 344, glutamate 348, 377-384 (FTAQSRMS), and lysine 395. 2 residues coordinate Mg(2+): aspartate 518 and aspartate 522. The next 3 membrane-spanning stretches (helical) occupy residues 588-608 (FAII…LNIM), 616-636 (AILS…PLAL), and 656-676 (IYGL…DLLL).

It belongs to the cation transport ATPase (P-type) (TC 3.A.3) family. Type IA subfamily. The system is composed of three essential subunits: KdpA, KdpB and KdpC.

The protein localises to the cell inner membrane. It catalyses the reaction K(+)(out) + ATP + H2O = K(+)(in) + ADP + phosphate + H(+). Functionally, part of the high-affinity ATP-driven potassium transport (or Kdp) system, which catalyzes the hydrolysis of ATP coupled with the electrogenic transport of potassium into the cytoplasm. This subunit is responsible for energy coupling to the transport system and for the release of the potassium ions to the cytoplasm. This chain is Potassium-transporting ATPase ATP-binding subunit, found in Escherichia coli (strain UTI89 / UPEC).